The chain runs to 506 residues: ATP synthase subunit alpha (506 aa).

An ATP-binding site is contributed by 170 to 177 (GDRQTGKT).

This sequence belongs to the ATPase alpha/beta chains family. In terms of assembly, F-type ATPases have 2 components, CF(1) - the catalytic core - and CF(0) - the membrane proton channel. CF(1) has five subunits: alpha(3), beta(3), gamma(1), delta(1), epsilon(1). CF(0) has four main subunits: a(1), b(1), b'(1) and c(9-12).

The protein resides in the cellular thylakoid membrane. It carries out the reaction ATP + H2O + 4 H(+)(in) = ADP + phosphate + 5 H(+)(out). Its function is as follows. Produces ATP from ADP in the presence of a proton gradient across the membrane. The alpha chain is a regulatory subunit. This Synechococcus sp. (strain CC9902) protein is ATP synthase subunit alpha.